Here is a 228-residue protein sequence, read N- to C-terminus: 7-cyano-7-deazaguanine synthase (228 aa).

8–18 (LSGGLDSTTCL) provides a ligand contact to ATP. Zn(2+) contacts are provided by cysteine 188, cysteine 198, cysteine 201, and cysteine 204.

The protein belongs to the QueC family. Zn(2+) serves as cofactor.

It catalyses the reaction 7-carboxy-7-deazaguanine + NH4(+) + ATP = 7-cyano-7-deazaguanine + ADP + phosphate + H2O + H(+). The protein operates within purine metabolism; 7-cyano-7-deazaguanine biosynthesis. In terms of biological role, catalyzes the ATP-dependent conversion of 7-carboxy-7-deazaguanine (CDG) to 7-cyano-7-deazaguanine (preQ(0)). The polypeptide is 7-cyano-7-deazaguanine synthase (Legionella pneumophila (strain Corby)).